Consider the following 475-residue polypeptide: Chromosomal replication initiator protein DnaA (475 aa).

The interval 1–73 (MTNSEQERWS…LSCWQAEMPE (73 aa)) is domain I, interacts with DnaA modulators. Residues 73–131 (EVHRIDLSVRTAMRCATPAKEAPVAVEARRAERGDAKPADTRAPVMTPVAASHDALGGS) are domain II. Residues 132–354 (PLDPRLTFAS…GAINRLLAHS (223 aa)) form a domain III, AAA+ region region. Positions 179, 181, 182, and 183 each coordinate ATP. The tract at residues 355 to 475 (KLNNQPVTLD…VEALKRQLQD (121 aa)) is domain IV, binds dsDNA.

Belongs to the DnaA family. In terms of assembly, oligomerizes as a right-handed, spiral filament on DNA at oriC.

The protein localises to the cytoplasm. Plays an essential role in the initiation and regulation of chromosomal replication. ATP-DnaA binds to the origin of replication (oriC) to initiate formation of the DNA replication initiation complex once per cell cycle. Binds the DnaA box (a 9 base pair repeat at the origin) and separates the double-stranded (ds)DNA. Forms a right-handed helical filament on oriC DNA; dsDNA binds to the exterior of the filament while single-stranded (ss)DNA is stabiized in the filament's interior. The ATP-DnaA-oriC complex binds and stabilizes one strand of the AT-rich DNA unwinding element (DUE), permitting loading of DNA polymerase. After initiation quickly degrades to an ADP-DnaA complex that is not apt for DNA replication. Binds acidic phospholipids. The polypeptide is Chromosomal replication initiator protein DnaA (Bradyrhizobium sp. (strain BTAi1 / ATCC BAA-1182)).